A 368-amino-acid polypeptide reads, in one-letter code: F-box only protein 28 (368 aa).

Basic and acidic residues predominate over residues 1–11 (MAAAAEERMAE). A disordered region spans residues 1–56 (MAAAAEERMAEEGGGGQGDGGSSLASGSTQRQPPPPAPQHPQPGSQALPAPALAPD). Over residues 12–21 (EGGGGQGDGG) the composition is skewed to gly residues. The span at 22–31 (SSLASGSTQR) shows a compositional bias: low complexity. Over residues 32–41 (QPPPPAPQHP) the composition is skewed to pro residues. The span at 42–56 (QPGSQALPAPALAPD) shows a compositional bias: low complexity. The region spanning 61 to 109 (NNTLVALPIVAIENILSFMSYDEISQLRLVCKRMDLVCQRMLNQGFLKV) is the F-box domain. 2 positions are modified to phosphoserine: Ser235 and Ser242. Residue Thr270 is modified to Phosphothreonine. Residues 328–368 (MESAVGNSSGSGQNEESPRKRKKATEAIDSLRKSKRLRNRK) form a disordered region. Low complexity predominate over residues 333–342 (GNSSGSGQNE). Ser344 is modified (phosphoserine).

Part of a SCF (SKP1-cullin-F-box) protein ligase complex.

It localises to the chromosome. The protein localises to the centromere. It is found in the kinetochore. Its function is as follows. Probably recognizes and binds to some phosphorylated proteins and promotes their ubiquitination and degradation. The polypeptide is F-box only protein 28 (FBXO28) (Homo sapiens (Human)).